A 216-amino-acid chain; its full sequence is Urease accessory protein UreG (216 aa).

25 to 32 (GPVGSGKT) lines the GTP pocket.

Belongs to the SIMIBI class G3E GTPase family. UreG subfamily. As to quaternary structure, homodimer. UreD, UreF and UreG form a complex that acts as a GTP-hydrolysis-dependent molecular chaperone, activating the urease apoprotein by helping to assemble the nickel containing metallocenter of UreC. The UreE protein probably delivers the nickel.

Its subcellular location is the cytoplasm. In terms of biological role, facilitates the functional incorporation of the urease nickel metallocenter. This process requires GTP hydrolysis, probably effectuated by UreG. The chain is Urease accessory protein UreG from Burkholderia pseudomallei (strain 1710b).